The chain runs to 349 residues: Phenylalanine--tRNA ligase alpha subunit (349 aa).

E258 provides a ligand contact to Mg(2+).

It belongs to the class-II aminoacyl-tRNA synthetase family. Phe-tRNA synthetase alpha subunit type 1 subfamily. Tetramer of two alpha and two beta subunits. It depends on Mg(2+) as a cofactor.

The protein resides in the cytoplasm. The catalysed reaction is tRNA(Phe) + L-phenylalanine + ATP = L-phenylalanyl-tRNA(Phe) + AMP + diphosphate + H(+). This chain is Phenylalanine--tRNA ligase alpha subunit, found in Rickettsia conorii (strain ATCC VR-613 / Malish 7).